The sequence spans 352 residues: Maleylacetate reductase (352 aa).

The protein belongs to the iron-containing alcohol dehydrogenase family.

The enzyme catalyses 3-oxoadipate + NAD(+) = maleylacetate + NADH + H(+). The catalysed reaction is 3-oxoadipate + NADP(+) = maleylacetate + NADPH + H(+). It participates in xenobiotic degradation; (2,4,5-trichlorophenoxy)acetate degradation. This Burkholderia cepacia (Pseudomonas cepacia) protein is Maleylacetate reductase (tftE).